Reading from the N-terminus, the 508-residue chain is DEAD-box ATP-dependent RNA helicase 8 (508 aa).

Residues Met1 to Tyr123 form a disordered region. The segment covering Asn18–Pro53 has biased composition (low complexity). The span at Gln54 to Gln64 shows a compositional bias: basic residues. A Q motif motif is present at residues Asn134–Glu162. The 171-residue stretch at Ile165–Ile335 folds into the Helicase ATP-binding domain. Ala178–Thr185 serves as a coordination point for ATP. The DEAD box motif lies at Asp283 to Asp286. In terms of domain architecture, Helicase C-terminal spans Gly345–Ile505.

The protein belongs to the DEAD box helicase family. DDX6/DHH1 subfamily.

It localises to the cytoplasm. It is found in the P-body. The enzyme catalyses ATP + H2O = ADP + phosphate + H(+). ATP-dependent RNA helicase involved in mRNA turnover, and more specifically in mRNA decapping. The sequence is that of DEAD-box ATP-dependent RNA helicase 8 from Oryza sativa subsp. japonica (Rice).